Reading from the N-terminus, the 294-residue chain is MNNIFKGLITALITPFKDNKLDLYALERILKHQIKHDVDAILIAGSTGEGSSLSFEEYKLLLQTSVEIVNKRIPIISGCSSNNTAYAIELAAESTKIKVDGFMASPPSYVKPTQHGIYKHFEALHEACNLPIILYSAPTRSGVDFSDETILRLSALTRILALKDCGVDLGRPLRIRAIVKKDFNILTGNDEVVLAFNAQGGVGWTAVASNIAPDMCKELLEKWYKNDTKGALEIHQKLLPLYKALFLESNPIPIKYAAHYLGLCENEIRPPLTEASDSAKKQIENIITALSIKI.

T47 lines the pyruvate pocket. Y135 acts as the Proton donor/acceptor in catalysis. K163 acts as the Schiff-base intermediate with substrate in catalysis. Pyruvate is bound at residue T205.

It belongs to the DapA family. Homotetramer; dimer of dimers.

The protein localises to the cytoplasm. The enzyme catalyses L-aspartate 4-semialdehyde + pyruvate = (2S,4S)-4-hydroxy-2,3,4,5-tetrahydrodipicolinate + H2O + H(+). The protein operates within amino-acid biosynthesis; L-lysine biosynthesis via DAP pathway; (S)-tetrahydrodipicolinate from L-aspartate: step 3/4. In terms of biological role, catalyzes the condensation of (S)-aspartate-beta-semialdehyde [(S)-ASA] and pyruvate to 4-hydroxy-tetrahydrodipicolinate (HTPA). The polypeptide is 4-hydroxy-tetrahydrodipicolinate synthase (Rickettsia akari (strain Hartford)).